A 489-amino-acid chain; its full sequence is Monocarboxylate transporter 2 (489 aa).

Residues methionine 1–aspartate 21 lie on the Cytoplasmic side of the membrane. The chain crosses the membrane as a helical span at residues glycine 22–phenylalanine 42. At proline 43–alanine 65 the chain is on the extracellular side. A helical membrane pass occupies residues tryptophan 66 to valine 86. At asparagine 87 to valine 95 the chain is on the cytoplasmic side. Residues isoleucine 96–isoleucine 116 traverse the membrane as a helical segment. Residues glutamate 117–threonine 121 lie on the Extracellular side of the membrane. Residues valine 122–glycine 142 form a helical membrane-spanning segment. The Cytoplasmic portion of the chain corresponds to lysine 143–glycine 154. Residues phenylalanine 155–phenylalanine 175 form a helical membrane-spanning segment. Residues asparagine 176 to glycine 179 are Extracellular-facing. The helical transmembrane segment at tryptophan 180–leucine 200 threads the bilayer. The Cytoplasmic portion of the chain corresponds to methionine 201–glycine 250. The segment at proline 206 to arginine 227 is disordered. A helical membrane pass occupies residues phenylalanine 251–phenylalanine 271. The Extracellular portion of the chain corresponds to leucine 272–serine 286. The helical transmembrane segment at alanine 287–isoleucine 307 threads the bilayer. The Cytoplasmic segment spans residues alanine 308–arginine 316. A helical membrane pass occupies residues isoleucine 317–leucine 337. At alanine 338–threonine 342 the chain is on the extracellular side. Residues alanine 343–phenylalanine 363 form a helical membrane-spanning segment. The Cytoplasmic portion of the chain corresponds to glutamate 364 to serine 377. The helical transmembrane segment at alanine 378 to glycine 398 threads the bilayer. The Extracellular portion of the chain corresponds to lysine 399 to leucine 410. Residues tyrosine 411–isoleucine 431 form a helical membrane-spanning segment. The Cytoplasmic portion of the chain corresponds to asparagine 432–isoleucine 489. The disordered stretch occupies residues lysine 441–isoleucine 489. 2 stretches are compositionally biased toward basic and acidic residues: residues lysine 456 to threonine 470 and proline 480 to isoleucine 489.

It belongs to the major facilitator superfamily. Monocarboxylate porter (TC 2.A.1.13) family. Homodimer. Interacts with GRID2IP. Interacts with EMB; interaction mediates SLC16A7 targeting to the plasma membrane. Interacts with isoform 2 of BSG. As to expression, detected in brain and kidney (at protein level).

It is found in the cell membrane. The protein localises to the basolateral cell membrane. It localises to the cytoplasm. The catalysed reaction is 3-methyl-2-oxobutanoate(out) + H(+)(out) = 3-methyl-2-oxobutanoate(in) + H(+)(in). It catalyses the reaction (S)-lactate(in) + H(+)(in) = (S)-lactate(out) + H(+)(out). The enzyme catalyses acetoacetate(out) + H(+)(out) = acetoacetate(in) + H(+)(in). It carries out the reaction (R)-3-hydroxybutanoate(out) + H(+)(out) = (R)-3-hydroxybutanoate(in) + H(+)(in). The catalysed reaction is 4-methyl-2-oxopentanoate(out) + H(+)(out) = 4-methyl-2-oxopentanoate(in) + H(+)(in). It catalyses the reaction pyruvate(out) + H(+)(out) = pyruvate(in) + H(+)(in). The enzyme catalyses (S)-3-hydroxybutanoate(out) + H(+)(out) = (S)-3-hydroxybutanoate(in) + H(+)(in). Its activity is regulated as follows. Transport activity exhibits steep dependence on substrate concentration. Substrate concentration sensitivity of SLC16A7 arises from the strong inter-subunit cooperativity of the SLC16A7 dimer during transport. Inhibited by AR-C155858. In terms of biological role, proton-coupled monocarboxylate symporter. Catalyzes the rapid transport across the plasma membrane of monocarboxylates such as L-lactate, pyruvate and ketone bodies, acetoacetate, beta-hydroxybutyrate and acetate. Dimerization is functionally required and both subunits work cooperatively in transporting substrate. This chain is Monocarboxylate transporter 2 (Slc16a7), found in Rattus norvegicus (Rat).